A 224-amino-acid chain; its full sequence is Prophage repressor CohE (224 aa).

The sequence is that of Prophage repressor CohE (cohE) from Escherichia coli (strain K12).